Here is a 31-residue protein sequence, read N- to C-terminus: Cytochrome b6-f complex subunit 6 (31 aa).

The helical transmembrane segment at 3 to 23 threads the bilayer; sequence TITSYFGFLLAVLTITSGLFI.

The protein belongs to the PetL family. The 4 large subunits of the cytochrome b6-f complex are cytochrome b6, subunit IV (17 kDa polypeptide, PetD), cytochrome f and the Rieske protein, while the 4 small subunits are PetG, PetL, PetM and PetN. The complex functions as a dimer.

Its subcellular location is the plastid. The protein localises to the chloroplast thylakoid membrane. Its function is as follows. Component of the cytochrome b6-f complex, which mediates electron transfer between photosystem II (PSII) and photosystem I (PSI), cyclic electron flow around PSI, and state transitions. PetL is important for photoautotrophic growth as well as for electron transfer efficiency and stability of the cytochrome b6-f complex. This chain is Cytochrome b6-f complex subunit 6, found in Lotus japonicus (Lotus corniculatus var. japonicus).